Here is a 112-residue protein sequence, read N- to C-terminus: Ig kappa chain V-III region PC 7132 (112 aa).

A framework-1 region spans residues 1–23; it reads DIVLTQSPASLAVSLGQRATISC. Cys23 and Cys92 are disulfide-bonded. Residues 24–38 form a complementarity-determining-1 region; sequence RASESVDNYGISFMN. The tract at residues 39–53 is framework-2; it reads WFQQKPGQPPKLLIY. The interval 54-60 is complementarity-determining-2; sequence AASNQGS. A framework-3 region spans residues 61–92; sequence GVPARFSGSGSGTDFSLNIHPMEEDDTAMYFC. The tract at residues 93–102 is complementarity-determining-3; that stretch reads QQSKEVPPYT. The framework-4 stretch occupies residues 103 to 112; that stretch reads FGGGTKLEIK.

This Mus musculus (Mouse) protein is Ig kappa chain V-III region PC 7132.